The primary structure comprises 344 residues: Ferredoxin--NADP reductase (344 aa).

Residues Ser-12, Asp-31, Lys-39, Tyr-43, Val-83, Ile-118, Asp-285, and Ser-326 each coordinate FAD.

It belongs to the ferredoxin--NADP reductase type 2 family. In terms of assembly, homodimer. Requires FAD as cofactor.

The enzyme catalyses 2 reduced [2Fe-2S]-[ferredoxin] + NADP(+) + H(+) = 2 oxidized [2Fe-2S]-[ferredoxin] + NADPH. The polypeptide is Ferredoxin--NADP reductase (Staphylococcus aureus (strain MW2)).